A 497-amino-acid chain; its full sequence is Glycerol kinase (497 aa).

Threonine 13 contacts ADP. 3 residues coordinate ATP: threonine 13, threonine 14, and serine 15. Threonine 13 serves as a coordination point for sn-glycerol 3-phosphate. Arginine 17 lines the ADP pocket. Residues arginine 83, glutamate 84, and tyrosine 135 each contribute to the sn-glycerol 3-phosphate site. Positions 83, 84, and 135 each coordinate glycerol. Histidine 231 is modified (phosphohistidine; by HPr). Aspartate 245 lines the sn-glycerol 3-phosphate pocket. 2 residues coordinate glycerol: aspartate 245 and glutamine 246. Positions 267 and 310 each coordinate ADP. Residues threonine 267, glycine 310, glutamine 314, and glycine 411 each contribute to the ATP site. Positions 411 and 415 each coordinate ADP.

The protein belongs to the FGGY kinase family. Homotetramer and homodimer (in equilibrium). The phosphoenolpyruvate-dependent sugar phosphotransferase system (PTS), including enzyme I, and histidine-containing protein (HPr) are required for the phosphorylation, which leads to the activation of the enzyme.

The catalysed reaction is glycerol + ATP = sn-glycerol 3-phosphate + ADP + H(+). Its pathway is polyol metabolism; glycerol degradation via glycerol kinase pathway; sn-glycerol 3-phosphate from glycerol: step 1/1. With respect to regulation, activated by phosphorylation and inhibited by fructose 1,6-bisphosphate (FBP). In terms of biological role, key enzyme in the regulation of glycerol uptake and metabolism. Catalyzes the phosphorylation of glycerol to yield sn-glycerol 3-phosphate. This is Glycerol kinase from Listeria monocytogenes serotype 4a (strain HCC23).